Consider the following 51-residue polypeptide: Large ribosomal subunit protein eL39z/eL39x (51 aa).

The disordered stretch occupies residues 1–21 (MPSHKSFMIKKKLGKKMRQNR). A compositionally biased stretch (basic residues) spans 7–19 (FMIKKKLGKKMRQ).

This sequence belongs to the eukaryotic ribosomal protein eL39 family.

This Arabidopsis thaliana (Mouse-ear cress) protein is Large ribosomal subunit protein eL39z/eL39x (RPL39A).